A 760-amino-acid polypeptide reads, in one-letter code: ATP-dependent zinc metalloprotease FtsH (760 aa).

Topologically, residues 1 to 5 are cytoplasmic; sequence MNRKN. The helical transmembrane segment at 6–26 threads the bilayer; it reads VTRTITAIAVVVLLGWSFFYF. Over 27–110 the chain is Extracellular; that stretch reads SDDTRGYKPV…KVSTVVNQGS (84 aa). A helical membrane pass occupies residues 111–131; sequence ILGELLVYVLPLLLLVGLFVM. Topologically, residues 132-760 are cytoplasmic; sequence FSRMQGGARM…EVSRTKPAHG (629 aa). 203–210 is an ATP binding site; that stretch reads GPPGTGKT. Position 425 (H425) interacts with Zn(2+). E426 is an active-site residue. The Zn(2+) site is built by H429 and D501. A disordered region spans residues 616–760; it reads DFGGRIPSDK…EVSRTKPAHG (145 aa). Low complexity predominate over residues 650–669; sequence AFKAAIAQATQAAEAARSDA. A compositionally biased stretch (acidic residues) spans 740 to 750; sequence GSDESSAEQDD.

It in the central section; belongs to the AAA ATPase family. The protein in the C-terminal section; belongs to the peptidase M41 family. As to quaternary structure, homohexamer. The cofactor is Zn(2+).

Its subcellular location is the cell membrane. Acts as a processive, ATP-dependent zinc metallopeptidase for both cytoplasmic and membrane proteins. Plays a role in the quality control of integral membrane proteins. The polypeptide is ATP-dependent zinc metalloprotease FtsH (Mycobacterium tuberculosis (strain CDC 1551 / Oshkosh)).